The sequence spans 357 residues: (4E)-oxalomesaconate Delta-isomerase (357 aa).

The protein belongs to the PrpF family.

It catalyses the reaction (1E)-4-oxobut-1-ene-1,2,4-tricarboxylate = (3Z)-2-oxo-4-carboxy-3-hexenedioate. Its pathway is secondary metabolite metabolism; lignin degradation. In terms of biological role, contributes to the degradation of lignin at the level of the protocatechuate 4,5-cleavage pathway. Catalyzes the isomerization of the double bond between C4 and C5 in (4E)-oxalomesaconate (OMA) to (3Z)-2-keto-4-carboxy-3-hexenedioate (KCH), where the double bond has migrated between C3 and C4 via a 1,3-allylic isomerization. The protein is (4E)-oxalomesaconate Delta-isomerase of Novosphingobium sp. (strain KA1) (Sphingomonas sp. (strain KA1)).